A 316-amino-acid chain; its full sequence is Beta-ketoacyl-[acyl-carrier-protein] synthase III 1 (316 aa).

Residues cysteine 112 and histidine 243 contribute to the active site. The interval 244–248 (QANYR) is ACP-binding. The active site involves asparagine 273.

This sequence belongs to the thiolase-like superfamily. FabH family. Homodimer.

It is found in the cytoplasm. The catalysed reaction is malonyl-[ACP] + acetyl-CoA + H(+) = 3-oxobutanoyl-[ACP] + CO2 + CoA. It participates in lipid metabolism; fatty acid biosynthesis. In terms of biological role, catalyzes the condensation reaction of fatty acid synthesis by the addition to an acyl acceptor of two carbons from malonyl-ACP. Catalyzes the first condensation reaction which initiates fatty acid synthesis and may therefore play a role in governing the total rate of fatty acid production. Possesses both acetoacetyl-ACP synthase and acetyl transacylase activities. Its substrate specificity determines the biosynthesis of branched-chain and/or straight-chain of fatty acids. This Vibrio parahaemolyticus serotype O3:K6 (strain RIMD 2210633) protein is Beta-ketoacyl-[acyl-carrier-protein] synthase III 1.